The chain runs to 284 residues: Pantothenate synthetase (284 aa).

Residue 32 to 39 (MGALHEGH) participates in ATP binding. H39 acts as the Proton donor in catalysis. Position 63 (Q63) interacts with (R)-pantoate. Q63 lines the beta-alanine pocket. An ATP-binding site is contributed by 149–152 (GEKD). Q155 provides a ligand contact to (R)-pantoate. ATP contacts are provided by residues V178 and 186–189 (LSSR).

This sequence belongs to the pantothenate synthetase family. In terms of assembly, homodimer.

The protein resides in the cytoplasm. The catalysed reaction is (R)-pantoate + beta-alanine + ATP = (R)-pantothenate + AMP + diphosphate + H(+). The protein operates within cofactor biosynthesis; (R)-pantothenate biosynthesis; (R)-pantothenate from (R)-pantoate and beta-alanine: step 1/1. In terms of biological role, catalyzes the condensation of pantoate with beta-alanine in an ATP-dependent reaction via a pantoyl-adenylate intermediate. In Chelativorans sp. (strain BNC1), this protein is Pantothenate synthetase.